Consider the following 128-residue polypeptide: Disintegrin lebein-2-alpha (128 aa).

The first 20 residues, 1 to 20, serve as a signal peptide directing secretion; that stretch reads MIQVLLVTICLAVFPFHGSS. A propeptide spanning residues 21 to 46 is cleaved from the precursor; the sequence is IILESGNVNDYEVVYPKKVTLLPTGA. Positions 47-111 constitute a Disintegrin domain; it reads MNSANPCCDP…SDCPRNPWKS (65 aa). 4 disulfide bridges follow: Cys-53–Cys-76, Cys-67–Cys-73, Cys-72–Cys-97, and Cys-85–Cys-104. The short motif at 89-91 is the Cell attachment site; atypical (MLD) element; that stretch reads MLD. Residues 112 to 128 constitute a propeptide that is removed on maturation; it reads EEDEMKWSATAKGSVLM.

It belongs to the disintegrin family. Dimeric disintegrin subfamily. Heterodimer with subunit beta; disulfide-linked. Expressed by the venom gland.

The protein resides in the secreted. Its function is as follows. Inhibits ADP-induced human platelet aggregation. Antagonist of alpha-IIb/beta-3 (ITGA2B/ITGB3). Also avidly binds to the laminin-binding beta-1 integrins (alpha-3/beta-1 (ITGA3/ITGB1), alpha-6/beta-1 (ITGA6/ITGB1), and alpha-7/beta-1 (ITGA7/ITGB1)) in an RGD-independent manner. This is Disintegrin lebein-2-alpha from Macrovipera lebetinus (Levantine viper).